The chain runs to 788 residues: Diacylglycerol kinase gamma (788 aa).

Positions 83–93 (PRQETPDHPKE) are enriched in basic and acidic residues. Positions 83-150 (PRQETPDHPK…WGEPNAPASS (68 aa)) are disordered. Over residues 95 to 109 (ASSSEPNVSDSNAES) the composition is skewed to polar residues. 2 consecutive EF-hand domains span residues 172–207 (RPQDKLEFMFRLYDSDENELLDQAELDQIVSQMLHV) and 217–252 (ELRPILKEMLQGMDYNKDGFVSLEEWVSGGMTTIPL). Residues D185, D187, N189, E196, D230, N232, D234, and E241 each coordinate Ca(2+). 2 Phorbol-ester/DAG-type zinc fingers span residues 268–318 (RHAW…IPGC) and 333–380 (QHAW…STAC). Positions 427 to 561 (PGTHPLLVLV…LDRWYLEVMP (135 aa)) constitute a DAGKc domain. The disordered stretch occupies residues 768–788 (MMGPPQKSSFFSLRRKSRSKD).

This sequence belongs to the eukaryotic diacylglycerol kinase family. In terms of tissue distribution, expressed specifically in brain. Highly expressed in cerebellar Purkinje cells (at protein level).

Its subcellular location is the membrane. It is found in the cytoplasm. The protein localises to the cytosol. The protein resides in the cytoskeleton. It carries out the reaction a 1,2-diacyl-sn-glycerol + ATP = a 1,2-diacyl-sn-glycero-3-phosphate + ADP + H(+). The catalysed reaction is 1,2-didecanoyl-sn-glycerol + ATP = 1,2-didecanoyl-sn-glycero-3-phosphate + ADP + H(+). The enzyme catalyses 1,2-di-(9Z-octadecenoyl)-sn-glycerol + ATP = 1,2-di-(9Z-octadecenoyl)-sn-glycero-3-phosphate + ADP + H(+). It catalyses the reaction 1-octadecanoyl-2-(9Z,12Z)-octadecadienoyl-sn-glycerol + ATP = 1-octadecanoyl-2-(9Z,12Z-octadecadienoyl)-sn-glycero-3-phosphate + ADP + H(+). It carries out the reaction 1-octadecanoyl-2-(5Z,8Z,11Z,14Z-eicosatetraenoyl)-sn-glycerol + ATP = 1-octadecanoyl-2-(5Z,8Z,11Z,14Z-eicosatetraenoyl)-sn-glycero-3-phosphate + ADP + H(+). Its pathway is lipid metabolism; glycerolipid metabolism. Its activity is regulated as follows. The activity is calcium-dependent. Requires phosphatidylserine for maximal activity. Its function is as follows. Diacylglycerol kinase that converts diacylglycerol/DAG into phosphatidic acid/phosphatidate/PA and regulates the respective levels of these two bioactive lipids. Thereby, acts as a central switch between the signaling pathways activated by these second messengers with different cellular targets and opposite effects in numerous biological processes. Has no apparent specificity with regard to the acyl compositions of diacylglycerol. Specifically expressed in the cerebellum where it controls the level of diacylglycerol which in turn regulates the activity of protein kinase C gamma. Through protein kinase C gamma, indirectly regulates the dendritic development of Purkinje cells, cerebellar long term depression and ultimately cerebellar motor coordination. In Rattus norvegicus (Rat), this protein is Diacylglycerol kinase gamma (Dgkg).